The chain runs to 332 residues: D-lactate dehydrogenase (332 aa).

NAD(+)-binding positions include Arg-155 to Ile-156, Asp-175, Val-206 to Pro-207, Asn-212, Phe-233 to Arg-235, and Asp-259. Arg-235 is an active-site residue. The active site involves Glu-264. His-296 acts as the Proton donor in catalysis.

Belongs to the D-isomer specific 2-hydroxyacid dehydrogenase family.

The enzyme catalyses (R)-lactate + NAD(+) = pyruvate + NADH + H(+). This Lactiplantibacillus plantarum (strain ATCC BAA-793 / NCIMB 8826 / WCFS1) (Lactobacillus plantarum) protein is D-lactate dehydrogenase (ldhD).